The sequence spans 61 residues: Large ribosomal subunit protein uL30 (61 aa).

The protein belongs to the universal ribosomal protein uL30 family. As to quaternary structure, part of the 50S ribosomal subunit.

The chain is Large ribosomal subunit protein uL30 from Treponema denticola (strain ATCC 35405 / DSM 14222 / CIP 103919 / JCM 8153 / KCTC 15104).